The chain runs to 66 residues: MKEGIHPKYNEVTVKCACGNSFQTRSTRTEISTEICSACHPFFTGKQKLVDTAGRVERFRKKYGMQ.

Zn(2+) is bound by residues Cys16, Cys18, Cys36, and Cys39.

It belongs to the bacterial ribosomal protein bL31 family. Type A subfamily. As to quaternary structure, part of the 50S ribosomal subunit. Requires Zn(2+) as cofactor.

Its function is as follows. Binds the 23S rRNA. In Geobacter metallireducens (strain ATCC 53774 / DSM 7210 / GS-15), this protein is Large ribosomal subunit protein bL31.